The primary structure comprises 140 residues: Natriuretic peptides B (140 aa).

An N-terminal signal peptide occupies residues 1-26 (MEPCAALPRALLLLLFLHLSPLGGRP). Residues 71–94 (LEPLHRSHSPAEAPEAGGTPRGVL) are disordered. An intrachain disulfide couples Cys-118 to Cys-134.

This sequence belongs to the natriuretic peptide family. The precursor molecule is proteolytically cleaved by the endoproteases FURIN or CORIN at Arg-108 to produce the brain natriuretic peptide 32. CORIN also cleaves the precursor molecule at additional residues including Arg-105, Arg-108 and possibly Lys-111. Post-translationally, undergoes further proteolytic cleavage by various proteases such as DPP4, MME and possibly FAP, to give rise to a variety of shorter peptides. Cleaved at Pro-110 by the prolyl endopeptidase FAP (seprase) activity (in vitro). Degraded by IDE. During IDE degradation, the resulting products initially increase the activation of NPR1 and can also stimulate NPR2 to produce cGMP before the fragments are completely degraded and inactivated by IDE (in vitro). As to expression, brain and also in atria, but at much lower levels than ANP.

It localises to the secreted. Cardiac hormone that plays a key role in mediating cardio-renal homeostasis. May also function as a paracrine antifibrotic factor in the heart. Acts by specifically binding and stimulating NPR1 to produce cGMP, which in turn activates effector proteins that drive various biological responses. Involved in regulating the extracellular fluid volume and maintaining the fluid-electrolyte balance through natriuresis, diuresis, vasorelaxation, and inhibition of renin and aldosterone secretion. Binds the clearance receptor NPR3. In terms of biological role, may affect cardio-renal homeostasis. Able to promote the production of cGMP although its potency is very low compared to brain natriuretic peptide 32. The protein is Natriuretic peptides B (NPPB) of Canis lupus familiaris (Dog).